A 100-amino-acid polypeptide reads, in one-letter code: Putative septation protein SpoVG (100 aa).

Belongs to the SpoVG family.

In terms of biological role, could be involved in septation. The polypeptide is Putative septation protein SpoVG (Clostridium novyi (strain NT)).